The following is a 903-amino-acid chain: Valine--tRNA ligase (903 aa).

Positions methionine 1–asparagine 15 are enriched in polar residues. Residues methionine 1–lysine 22 are disordered. A 'HIGH' region motif is present at residues proline 61–histidine 71. The 'KMSKS' region motif lies at lysine 552–serine 556. Lysine 555 contributes to the ATP binding site. Residues threonine 836–leucine 902 are a coiled coil.

Belongs to the class-I aminoacyl-tRNA synthetase family. ValS type 1 subfamily. As to quaternary structure, monomer.

The protein localises to the cytoplasm. It catalyses the reaction tRNA(Val) + L-valine + ATP = L-valyl-tRNA(Val) + AMP + diphosphate. Catalyzes the attachment of valine to tRNA(Val). As ValRS can inadvertently accommodate and process structurally similar amino acids such as threonine, to avoid such errors, it has a 'posttransfer' editing activity that hydrolyzes mischarged Thr-tRNA(Val) in a tRNA-dependent manner. This is Valine--tRNA ligase from Corynebacterium efficiens (strain DSM 44549 / YS-314 / AJ 12310 / JCM 11189 / NBRC 100395).